Reading from the N-terminus, the 93-residue chain is Large ribosomal subunit protein bL27 (93 aa).

Positions 1-9 (MLQLNLQFF) are excised as a propeptide. The segment at 14 to 33 (GVGSTKNGRDSISKRLGAKR) is disordered.

It belongs to the bacterial ribosomal protein bL27 family. The N-terminus is cleaved by ribosomal processing cysteine protease Prp.

The polypeptide is Large ribosomal subunit protein bL27 (Exiguobacterium sp. (strain ATCC BAA-1283 / AT1b)).